Consider the following 407-residue polypeptide: Methylthioribose kinase (407 aa).

ATP is bound by residues Asn-40, Lys-57, and 111–113; that span reads EDL. A substrate-binding site is contributed by Asp-229. Position 246–248 (246–248) interacts with ATP; the sequence is DAE. Arg-344 is a substrate binding site.

It belongs to the methylthioribose kinase family. Homodimer.

It catalyses the reaction 5-(methylsulfanyl)-D-ribose + ATP = 5-(methylsulfanyl)-alpha-D-ribose 1-phosphate + ADP + H(+). Its pathway is amino-acid biosynthesis; L-methionine biosynthesis via salvage pathway; S-methyl-5-thio-alpha-D-ribose 1-phosphate from S-methyl-5'-thioadenosine (hydrolase route): step 2/2. Its function is as follows. Catalyzes the phosphorylation of methylthioribose into methylthioribose-1-phosphate. The chain is Methylthioribose kinase from Yersinia pseudotuberculosis serotype O:1b (strain IP 31758).